The primary structure comprises 192 residues: Density-regulated protein homolog (192 aa).

The segment at 62–116 (GLEISDEPAADGDEKKKQKRGGKGSKTGAAAAQAAASGGKKKGGGPQKVTLQREP) is disordered. Positions 87–99 (KTGAAAAQAAASG) are enriched in low complexity. The region spanning 117 to 176 (RGKKSVTVIKGLATFDIDLKVASKLFAQKFACGSSVTGADEIVIQGDVKDDLLDLIPEKW) is the SUI1 domain.

This sequence belongs to the DENR family.

This chain is Density-regulated protein homolog, found in Caenorhabditis elegans.